The sequence spans 181 residues: Large ribosomal subunit protein uL5 (181 aa).

The protein belongs to the universal ribosomal protein uL5 family. In terms of assembly, part of the 50S ribosomal subunit; part of the 5S rRNA/L5/L18/L25 subcomplex. Contacts the 5S rRNA and the P site tRNA. Forms a bridge to the 30S subunit in the 70S ribosome.

This is one of the proteins that bind and probably mediate the attachment of the 5S RNA into the large ribosomal subunit, where it forms part of the central protuberance. In the 70S ribosome it contacts protein S13 of the 30S subunit (bridge B1b), connecting the 2 subunits; this bridge is implicated in subunit movement. Contacts the P site tRNA; the 5S rRNA and some of its associated proteins might help stabilize positioning of ribosome-bound tRNAs. The protein is Large ribosomal subunit protein uL5 of Thermosipho africanus (strain TCF52B).